The sequence spans 411 residues: Immunity-related GTPase family M protein (411 aa).

Residues 1-21 (MKPSHKSCEAAPLLPKMPETS) are disordered. Positions 77–253 (IPVSIFVTGD…PELRNTLQTD (177 aa)) constitute an IRG-type G domain. Residues 86 to 93 (DSGNGMSS), 111 to 115 (TGVVR), and 193 to 195 (KLD) contribute to the GTP site. At Ser204 the chain carries Phosphoserine. A GTP-binding site is contributed by 234-236 (SNL). A Glycyl lysine isopeptide (Lys-Gly) (interchain with G-Cter in ubiquitin) cross-link involves residue Lys272. Residues 352 to 376 (KLRLMTCTTVNALFCLFKFLPCLCH) are alpha-K amphipathic helix.

Belongs to the TRAFAC class dynamin-like GTPase superfamily. IRG family. In terms of assembly, interacts with ULK1; promoting the coassembly of ULK1 and BECN1. Interacts with BECN1; enhancing BECN1-interacting partners and influencing the composition of the BECN1 complex. Interacts with ATG16L1. Interacts with NOD2; promoting Irgm 'Lys-63'-linked polyubiquitination, which is required for interactions with the core autophagy factors. Interacts with STX17; promoting STX17 recruitment to autophagosomes. Interacts with ATG8 proteins (GABARAP, GABARAPL1, GABARAPL2, MAP1LC3A, MAP1LC3B and MAP1LC3C); promoting STX17 recruitment to autophagosomes. Interacts with TFEB; promoting association between TFEB and PPP3CB and TFEB dephosphorylation. Interacts with PPP3CB; promoting association between TFEB and PPP3CB and TFEB dephosphorylation. Interacts with NLRP3; preventing NLRP3 inflammasome assembly and promoting SQSTM1/p62-dependent autophagic degradation of NLRP3. Interacts with CGAS; promoting SQSTM1/p62-dependent autophagic degradation of CGAS. Interacts with RIGI/RIG-I; promoting SQSTM1/p62-dependent autophagic degradation of RIGI/RIG-I. Interacts with NOD1; promoting SQSTM1/p62-dependent autophagic degradation of RIGI/RIG-I. Interacts with NOD2; promoting SQSTM1/p62-dependent autophagic degradation of RIGI/RIG-I. Interacts with RIPK2; promoting SQSTM1/p62-dependent autophagic degradation of RIGI/RIG-I. Interacts with PIK3CA. Palmitoylated on C-terminal Cys residues. Palmitoylation, together with the alpha-K amphipathic helix, which binds phosphatidylinositol, mediate binding to membranes. In terms of processing, ubiquitinated via 'Lys-63'-linked polyubiquitination in a NOD2-dependent process. 'Lys-63'-linked polyubiquitination is required for interactions with the core autophagy factors. Ubiquitination at Lys-272 by the DCX(WDR77) complex, also named CLR4(WDR77) complex, in intestinal cells, leading to its degradation by the proteasome.

Its subcellular location is the golgi apparatus membrane. The protein localises to the cell membrane. The protein resides in the cytoplasmic vesicle. It localises to the phagosome membrane. It is found in the autophagosome membrane. Its subcellular location is the lysosome membrane. The protein localises to the late endosome membrane. The protein resides in the mitochondrion membrane. It localises to the cell projection. It is found in the phagocytic cup. It carries out the reaction GTP + H2O = GDP + phosphate + H(+). In terms of biological role, immunity-related GTPase that plays important roles in innate immunity and inflammatory response. Acts as a dynamin-like protein that binds to intracellular membranes and promotes remodeling and trafficking of those membranes. Required for clearance of acute protozoan and bacterial infections by interacting with autophagy and lysosome regulatory proteins, thereby promoting the fusion of phagosomes with lysosomes for efficient degradation of cargo including microbes. Regulates selective autophagy, including xenophagy and mitophagy, both directly and indirectly. Directly regulates autophagy by acting as a molecular adapter that promotes the coassembly of the core autophagy machinery to mediate antimicrobial defense: Irgm (1) activates AMPK, which in turn phosphorylates ULK1 and BECN1 to induce autophagy, (2) promotes the coassembly of ULK1 and BECN1, enhancing BECN1-interacting partners and (3) influences the composition of the BECN1 complex, by competing with the negative regulators BCL2 and RUBCN, to trigger autophagy. Also activates autophagy by promoting recruitment of STX17 to autophagosomes. In collaboration with ATG8 proteins, regulate lysosomal biogenesis, a fundamental process for any autophagic pathway, by promoting TFEB dephosphorylation. Also modulates autophagy by assisting with autophagosome formation and preventing lysosomal deacidification. Regulates autophagy by affecting mitochondrial fusion and fission. Also involved in M1 macrophage activation for the production of proinflammatory cytokines. While activating autophagy, acts as a key negative regulator of the inflammatory and interferon responses both by (1) promoting mitophagy and (2) mediating autophagy-dependent degradation of effectors of the inflammatory response. Promotes degradation of damaged and IFNG/IFN-gamma-stressed mitochondria via mitophagy, preventing cytosolic release of ligands that activate inflammation. Negatively regulates interferon-signaling in hematopoietic stem cells, preserving hematopoietic stem cell number and function. Promotes expansion of activated CD4(+) T-cells by inhibiting IFNG/IFN-gamma signaling, thereby preventing Ifng-mediated cell death of CD4(+) T-cells. Acts as a suppressor of inflammation by promoting recruitment of inflammation effectors, such as CGAS, RIGI/RIG-I and NLRP3, to autophagosome membranes, leading to their SQSTM1/p62-dependent autophagic degradation. Also directly inhibits assembly of the NLRP3 inflammasome by preventing the association between NLRP3 and PYCARD. Acts as a negative regulator of antiviral innate immune response by suppressing the RIPK2-dependent pro-inflammatory response: mediates recruitment of RIPosomes, composed of RIPK2 and NOD1 or NOD2, to autophagosome membranes, promoting their SQSTM1/p62-dependent autophagic degradation. This chain is Immunity-related GTPase family M protein, found in Rattus norvegicus (Rat).